The primary structure comprises 396 residues: Phosphoglycerate kinase (396 aa).

Substrate is bound by residues 21–23 (DFN), Arg-36, 59–62 (HLGK), Arg-119, and Arg-156. Residues Lys-206, Gly-294, Glu-325, and 352 to 355 (GGDS) contribute to the ATP site.

The protein belongs to the phosphoglycerate kinase family. In terms of assembly, monomer.

Its subcellular location is the cytoplasm. The catalysed reaction is (2R)-3-phosphoglycerate + ATP = (2R)-3-phospho-glyceroyl phosphate + ADP. Its pathway is carbohydrate degradation; glycolysis; pyruvate from D-glyceraldehyde 3-phosphate: step 2/5. The sequence is that of Phosphoglycerate kinase from Staphylococcus aureus (strain bovine RF122 / ET3-1).